Consider the following 236-residue polypeptide: Large ribosomal subunit protein uL3 (236 aa).

The segment at 215–236 (PAPEPAAPVAAAAAGTGEEASA) is disordered. The segment covering 221 to 236 (APVAAAAAGTGEEASA) has biased composition (low complexity).

Belongs to the universal ribosomal protein uL3 family. As to quaternary structure, part of the 50S ribosomal subunit. Forms a cluster with proteins L14 and L19.

Functionally, one of the primary rRNA binding proteins, it binds directly near the 3'-end of the 23S rRNA, where it nucleates assembly of the 50S subunit. This is Large ribosomal subunit protein uL3 from Parafrankia sp. (strain EAN1pec).